A 296-amino-acid polypeptide reads, in one-letter code: D-alanine--D-alanine ligase (296 aa).

In terms of domain architecture, ATP-grasp spans 103–293 (KEILMHHRMP…FDSFVKRIIE (191 aa)). 129–180 (ISFPVAVKPSSGGSSIATFKVKSIQELKHAYEEASKYGEVMIEQWVTGKEIT) lines the ATP pocket. Mg(2+) is bound by residues aspartate 247, glutamate 260, and asparagine 262.

Belongs to the D-alanine--D-alanine ligase family. Requires Mg(2+) as cofactor. The cofactor is Mn(2+).

It localises to the cytoplasm. It carries out the reaction 2 D-alanine + ATP = D-alanyl-D-alanine + ADP + phosphate + H(+). It functions in the pathway cell wall biogenesis; peptidoglycan biosynthesis. Its function is as follows. Cell wall formation. The chain is D-alanine--D-alanine ligase from Francisella tularensis subsp. tularensis (strain FSC 198).